We begin with the raw amino-acid sequence, 433 residues long: Apolipoprotein L5 (433 aa).

A disordered region spans residues histidine 346 to glutamine 433. Low complexity predominate over residues serine 359–valine 371. Residues arginine 422–glutamine 433 show a composition bias toward basic residues.

This sequence belongs to the apolipoprotein L family. As to expression, low level of expression; detected in uterus, testis, skeletal muscle and stomach.

The protein resides in the cytoplasm. In terms of biological role, may affect the movement of lipids in the cytoplasm or allow the binding of lipids to organelles. This chain is Apolipoprotein L5 (APOL5), found in Homo sapiens (Human).